An 84-amino-acid chain; its full sequence is UPF0473 protein CLJ_B2791 (84 aa).

It belongs to the UPF0473 family.

This Clostridium botulinum (strain 657 / Type Ba4) protein is UPF0473 protein CLJ_B2791.